The chain runs to 1335 residues: Aldehyde oxidase 3 (1335 aa).

One can recognise a 2Fe-2S ferredoxin-type domain in the interval 8–95 (DELIFFVNGK…GAAVTTVEGI (88 aa)). The [2Fe-2S] cluster site is built by Cys47, Cys52, Cys55, and Cys77. Gln116 serves as a coordination point for Mo-molybdopterin. [2Fe-2S] cluster contacts are provided by Cys117, Cys120, Cys152, and Cys154. The FAD-binding PCMH-type domain maps to 236–421 (FRGERTTWIA…ISVFVPRSSK (186 aa)). 264 to 271 (LVIGNTYL) is a binding site for FAD. At Ser320 the chain carries Phosphoserine. FAD-binding residues include Ser354, His358, Asp367, and Leu411. The Mo-molybdopterin site is built by Ala802, Leu1043, and Gln1199. Catalysis depends on Glu1266, which acts as the Proton acceptor; for azaheterocycle hydroxylase activity.

Belongs to the xanthine dehydrogenase family. In terms of assembly, homodimer. Requires [2Fe-2S] cluster as cofactor. It depends on FAD as a cofactor. The cofactor is Mo-molybdopterin. In terms of tissue distribution, highly expressed in liver (at protein level). In liver, the expression is greater in males than females.

The protein localises to the cytoplasm. The catalysed reaction is an aldehyde + O2 + H2O = a carboxylate + H2O2 + H(+). With respect to regulation, inhibited by potassium cyanide, menadione, benzamidine, raloxifene and norharmane. Functionally, oxidase with broad substrate specificity, oxidizing aromatic azaheterocycles, such as N1-methylnicotinamide and phthalazine, as well as aldehydes, such as benzaldehyde, retinal and pyridoxal. Plays a key role in the metabolism of xenobiotics and drugs containing aromatic azaheterocyclic substituents. Is probably involved in the regulation of reactive oxygen species homeostasis. May be a prominent source of superoxide generation via the one-electron reduction of molecular oxygen. May also catalyze nitric oxide (NO) production via the reduction of nitrite to NO with NADH or aldehyde as electron donor. This chain is Aldehyde oxidase 3 (Aox3), found in Mus musculus (Mouse).